The primary structure comprises 339 residues: MRVYYDRDADLNLIKSKNVVIVGYGSQGRAHALNLKDSGAKNVVIALKAGSPTVKKAEADGFKVMTVAEAAKWGDLLMMATPDELQADIYKADIAGNIRDGAAIAFAHGLNVHFGLIEPKASLDVVMIAPKGPGHTVRGEYQKGGGVPCLVAVHHNASGNALELALSYACGVGGGRSGIIETNFKEECETDLFGEQVVLCGGLVELIRAGFETLTEAGYAPEMAYFECLHEVKLIVDLIYEGGIANMNYSISNTAEWGEYVTGPRIITAETKAEMKRVLHDIQTGKFTSDWMQEYRSGAARFKGIRRMNDTHQIEEVGAKLRGMMPWIGKNKLVDKAVN.

Residues methionine 1–threonine 182 enclose the KARI N-terminal Rossmann domain. NADP(+)-binding positions include tyrosine 24–glutamine 27, lysine 48, serine 51, threonine 53, and aspartate 83–glutamine 86. The active site involves histidine 108. Residue glycine 134 coordinates NADP(+). The 146-residue stretch at asparagine 183–isoleucine 328 folds into the KARI C-terminal knotted domain. Positions 191, 195, 227, and 231 each coordinate Mg(2+). Residue serine 252 participates in substrate binding.

Belongs to the ketol-acid reductoisomerase family. Requires Mg(2+) as cofactor.

The catalysed reaction is (2R)-2,3-dihydroxy-3-methylbutanoate + NADP(+) = (2S)-2-acetolactate + NADPH + H(+). It catalyses the reaction (2R,3R)-2,3-dihydroxy-3-methylpentanoate + NADP(+) = (S)-2-ethyl-2-hydroxy-3-oxobutanoate + NADPH + H(+). It functions in the pathway amino-acid biosynthesis; L-isoleucine biosynthesis; L-isoleucine from 2-oxobutanoate: step 2/4. It participates in amino-acid biosynthesis; L-valine biosynthesis; L-valine from pyruvate: step 2/4. In terms of biological role, involved in the biosynthesis of branched-chain amino acids (BCAA). Catalyzes an alkyl-migration followed by a ketol-acid reduction of (S)-2-acetolactate (S2AL) to yield (R)-2,3-dihydroxy-isovalerate. In the isomerase reaction, S2AL is rearranged via a Mg-dependent methyl migration to produce 3-hydroxy-3-methyl-2-ketobutyrate (HMKB). In the reductase reaction, this 2-ketoacid undergoes a metal-dependent reduction by NADPH to yield (R)-2,3-dihydroxy-isovalerate. The sequence is that of Ketol-acid reductoisomerase (NADP(+)) from Agrobacterium fabrum (strain C58 / ATCC 33970) (Agrobacterium tumefaciens (strain C58)).